A 117-amino-acid polypeptide reads, in one-letter code: MKFQYKEDHPFEYRKKEGEKIRKKYPDRVPVIVEKAPKARVPDLDKRKYLVPSDLTVGQFYFLIRKRIHLRPEDALFFFVNNTIPPTSATMGQLYEDNREEDYFLYVAYSDESVYGK.

G116 carries Phosphatidylethanolamine amidated glycine; alternate lipidation. A lipid anchor (Phosphatidylserine amidated glycine; alternate) is attached at G116. Position 117 (K117) is a propeptide, removed in mature form.

The protein belongs to the ATG8 family. As to quaternary structure, interacts with ATG13, OPRK1, RB1CC1 and ULK1. Interacts with TP53INP1 and TP53INP2. Directly interacts with SQSTM1. Interacts with ATG3, ATG7 and MAP15. Interacts with TECPR2. Interacts with TBC1D5. Interacts with MAPK15. Interacts with TRIM5. Interacts with MEFV and TRIM21. Interacts with WDFY3. Interacts with the reticulophagy receptor TEX264. Interacts with UBA5. Interacts with KBTBD6 and KBTBD7; the interaction is direct. Interacts with reticulophagy regulators RETREG1, RETREG2 and RETREG3. Interacts with IRGM. Interacts with DNM2. Interacts with NCOA4 (via C-terminus). The precursor molecule is cleaved by ATG4 (ATG4A, ATG4B, ATG4C or ATG4D) to expose the glycine at the C-terminus and form the cytosolic form, GABARAPL1-I. The processed form is then activated by APG7L/ATG7, transferred to ATG3 and conjugated to phosphatidylethanolamine (PE) phospholipid to form the membrane-bound form, GABARAPL1-II. During non-canonical autophagy, the processed form is conjugated to phosphatidylserine (PS) phospholipid. ATG4 proteins also mediate the delipidation of PE-conjugated forms required for GABARAPL1 recycling when autophagosomes fuse with lysosomes. In addition, ATG4B and ATG4D mediate delipidation of ATG8 proteins conjugated to PS during non-canonical autophagy. ATG4B constitutes the major protein for proteolytic activation. ATG4D is the main enzyme for delipidation activity.

The protein localises to the cytoplasmic vesicle. It localises to the autophagosome. It is found in the cytoplasmic vesicle membrane. Its subcellular location is the cytoplasm. The protein resides in the cytoskeleton. The protein localises to the endoplasmic reticulum. It localises to the golgi apparatus. In terms of biological role, ubiquitin-like modifier that increases cell-surface expression of kappa-type opioid receptor through facilitating anterograde intracellular trafficking of the receptor. Involved in formation of autophagosomal vacuoles. While LC3s are involved in elongation of the phagophore membrane, the GABARAP/GATE-16 subfamily is essential for a later stage in autophagosome maturation. Through its interaction with the reticulophagy receptor TEX264, participates in the remodeling of subdomains of the endoplasmic reticulum into autophagosomes upon nutrient stress, which then fuse with lysosomes for endoplasmic reticulum turnover. This Pongo abelii (Sumatran orangutan) protein is Gamma-aminobutyric acid receptor-associated protein-like 1.